The following is a 562-amino-acid chain: Arginine--tRNA ligase 1 (562 aa).

Positions Pro-122–His-132 match the 'HIGH' region motif.

This sequence belongs to the class-I aminoacyl-tRNA synthetase family. In terms of assembly, monomer.

The protein resides in the cytoplasm. The catalysed reaction is tRNA(Arg) + L-arginine + ATP = L-arginyl-tRNA(Arg) + AMP + diphosphate. The polypeptide is Arginine--tRNA ligase 1 (Bacillus thuringiensis subsp. konkukian (strain 97-27)).